The sequence spans 176 residues: NAD(P)H-quinone oxidoreductase subunit 6, chloroplastic (176 aa).

The next 5 membrane-spanning stretches (helical) occupy residues 10–30 (FLLVFLGSGIILGGLGVVLLT), 32–52 (PIFSAFSLGLVLFCISLFHIP), 60–80 (AAQLLIYVGAINVLIIFAVMF), 107–127 (IFVSLITTILDTSWYGIIWTT), and 152–172 (FFLPFELVSIILLVALIGAIA).

It belongs to the complex I subunit 6 family. NDH is composed of at least 16 different subunits, 5 of which are encoded in the nucleus.

It is found in the plastid. It localises to the chloroplast thylakoid membrane. The catalysed reaction is a plastoquinone + NADH + (n+1) H(+)(in) = a plastoquinol + NAD(+) + n H(+)(out). It carries out the reaction a plastoquinone + NADPH + (n+1) H(+)(in) = a plastoquinol + NADP(+) + n H(+)(out). NDH shuttles electrons from NAD(P)H:plastoquinone, via FMN and iron-sulfur (Fe-S) centers, to quinones in the photosynthetic chain and possibly in a chloroplast respiratory chain. The immediate electron acceptor for the enzyme in this species is believed to be plastoquinone. Couples the redox reaction to proton translocation, and thus conserves the redox energy in a proton gradient. The polypeptide is NAD(P)H-quinone oxidoreductase subunit 6, chloroplastic (ndhG) (Buxus microphylla (Littleleaf boxwood)).